Here is a 217-residue protein sequence, read N- to C-terminus: Adenylate kinase (217 aa).

An ATP-binding site is contributed by 10-15 (GAGKGT). An NMP region spans residues 30–59 (STGDMFRAAMKEETPLGLEAKSYIDKGELV). AMP-binding positions include T31, R36, 57–59 (ELV), 85–88 (GFPR), and Q92. An LID region spans residues 126 to 163 (GRRICSVCGTTYHLVFNPPKTPGVCDKDGGDLYQRADD). R127 provides a ligand contact to ATP. Zn(2+) is bound by residues C130 and C133. 136–137 (TY) contributes to the ATP binding site. Zn(2+)-binding residues include C150 and D153. AMP-binding residues include R160 and R171. Q199 provides a ligand contact to ATP.

This sequence belongs to the adenylate kinase family. Monomer.

It is found in the cytoplasm. It carries out the reaction AMP + ATP = 2 ADP. The protein operates within purine metabolism; AMP biosynthesis via salvage pathway; AMP from ADP: step 1/1. Catalyzes the reversible transfer of the terminal phosphate group between ATP and AMP. Plays an important role in cellular energy homeostasis and in adenine nucleotide metabolism. The protein is Adenylate kinase of Bacillus velezensis (strain DSM 23117 / BGSC 10A6 / LMG 26770 / FZB42) (Bacillus amyloliquefaciens subsp. plantarum).